Here is a 28-residue protein sequence, read N- to C-terminus: Trypsin inhibitor 4 (28 aa).

3 cysteine pairs are disulfide-bonded: Cys2–Cys19, Cys9–Cys21, and Cys15–Cys27.

This sequence belongs to the protease inhibitor I7 (squash-type serine protease inhibitor) family.

The protein resides in the secreted. Inhibits trypsin. This is Trypsin inhibitor 4 from Luffa aegyptiaca (Sponge gourd).